A 702-amino-acid polypeptide reads, in one-letter code: Ribosomal RNA large subunit methyltransferase K/L (702 aa).

The 112-residue stretch at 43–154 folds into the THUMP domain; that stretch reads LVYQSLMWSR…KETASIALDL (112 aa).

It belongs to the methyltransferase superfamily. RlmKL family.

It localises to the cytoplasm. It catalyses the reaction guanosine(2445) in 23S rRNA + S-adenosyl-L-methionine = N(2)-methylguanosine(2445) in 23S rRNA + S-adenosyl-L-homocysteine + H(+). It carries out the reaction guanosine(2069) in 23S rRNA + S-adenosyl-L-methionine = N(2)-methylguanosine(2069) in 23S rRNA + S-adenosyl-L-homocysteine + H(+). Functionally, specifically methylates the guanine in position 2445 (m2G2445) and the guanine in position 2069 (m7G2069) of 23S rRNA. The polypeptide is Ribosomal RNA large subunit methyltransferase K/L (Escherichia coli O1:K1 / APEC).